We begin with the raw amino-acid sequence, 147 residues long: Ribonuclease H (147 aa).

Residues 1-142 (MTEIVEIFTD…ADALARSAIT (142 aa)) form the RNase H type-1 domain. Mg(2+) contacts are provided by Asp-10, Glu-48, Asp-70, and Asp-134.

The protein belongs to the RNase H family. As to quaternary structure, monomer. The cofactor is Mg(2+).

It is found in the cytoplasm. It carries out the reaction Endonucleolytic cleavage to 5'-phosphomonoester.. Endonuclease that specifically degrades the RNA of RNA-DNA hybrids. This is Ribonuclease H from Nitrosococcus oceani (strain ATCC 19707 / BCRC 17464 / JCM 30415 / NCIMB 11848 / C-107).